A 212-amino-acid polypeptide reads, in one-letter code: Large ribosomal subunit protein uL3 (212 aa).

Residues 117 to 142 (TSKGKGFQGNIKRHNQSRGPMTHGSR) form a disordered region.

This sequence belongs to the universal ribosomal protein uL3 family. Part of the 50S ribosomal subunit. Forms a cluster with proteins L14 and L19.

One of the primary rRNA binding proteins, it binds directly near the 3'-end of the 23S rRNA, where it nucleates assembly of the 50S subunit. This chain is Large ribosomal subunit protein uL3, found in Acholeplasma laidlawii (strain PG-8A).